An 89-amino-acid polypeptide reads, in one-letter code: Elongation factor 1-beta (89 aa).

This sequence belongs to the EF-1-beta/EF-1-delta family.

In terms of biological role, promotes the exchange of GDP for GTP in EF-1-alpha/GDP, thus allowing the regeneration of EF-1-alpha/GTP that could then be used to form the ternary complex EF-1-alpha/GTP/AAtRNA. The sequence is that of Elongation factor 1-beta (ef1b) from Methanothermobacter thermautotrophicus (strain ATCC 29096 / DSM 1053 / JCM 10044 / NBRC 100330 / Delta H) (Methanobacterium thermoautotrophicum).